The chain runs to 469 residues: NADH-quinone oxidoreductase subunit N (469 aa).

14 helical membrane passes run 9–29 (PLLMASEMMMFGAGLVALIAG), 40–60 (VGVMAAAAQVGVIGVAVVQMV), 76–96 (ATGVARIACAAGLLLIWAVAG), 105–125 (EAETYALLMFSATGVLVLAGA), 128–148 (LLLLVAGYFLASIPLYGLVGL), 162–182 (YLMGALFGILLMLGVTILYGL), 201–221 (VAVAAGVVGVLAGLMFEAGGV), 234–254 (ANATAATFLTTVPKIGALVAL), 265–285 (LAWPVLIAVFAVISMTLGNLA), 294–316 (RLLGWSTVSQVGYLLVPITVAGA), 327–347 (YLGGYTVTNIAAFAVTAALPG), 365–385 (AAALVVALLGLVGTPPTAVFI), 402–422 (LAVVVFVNTLVSLFYYLRWII), and 448–468 (VLAAALSLLLGIIAGPVWQLV).

Belongs to the complex I subunit 2 family. As to quaternary structure, NDH-1 is composed of 14 different subunits. Subunits NuoA, H, J, K, L, M, N constitute the membrane sector of the complex.

The protein resides in the cell membrane. It carries out the reaction a quinone + NADH + 5 H(+)(in) = a quinol + NAD(+) + 4 H(+)(out). In terms of biological role, NDH-1 shuttles electrons from NADH, via FMN and iron-sulfur (Fe-S) centers, to quinones in the respiratory chain. The immediate electron acceptor for the enzyme in this species is believed to be a menaquinone. Couples the redox reaction to proton translocation (for every two electrons transferred, four hydrogen ions are translocated across the cytoplasmic membrane), and thus conserves the redox energy in a proton gradient. The protein is NADH-quinone oxidoreductase subunit N of Mycobacterium sp. (strain JLS).